We begin with the raw amino-acid sequence, 490 residues long: ATP synthase subunit beta, plastid (490 aa).

170 to 177 (GGAGVGKT) is an ATP binding site.

Belongs to the ATPase alpha/beta chains family. In terms of assembly, F-type ATPases have 2 components, CF(1) - the catalytic core - and CF(0) - the membrane proton channel. CF(1) has five subunits: alpha(3), beta(3), gamma(1), delta(1), epsilon(1). CF(0) has four main subunits: a(1), b(1), b'(1) and c(9-12).

It is found in the plastid membrane. It catalyses the reaction ATP + H2O + 4 H(+)(in) = ADP + phosphate + 5 H(+)(out). Produces ATP from ADP in the presence of a proton gradient across the membrane. The catalytic sites are hosted primarily by the beta subunits. The chain is ATP synthase subunit beta, plastid from Cuscuta exaltata (Tall dodder).